Consider the following 547-residue polypeptide: (R)-citramalate synthase (547 aa).

In terms of domain architecture, Pyruvate carboxyltransferase spans 8–278 (LWLYDTTLRD…YDCIEPEKLA (271 aa)).

The protein belongs to the alpha-IPM synthase/homocitrate synthase family.

It catalyses the reaction pyruvate + acetyl-CoA + H2O = (3R)-citramalate + CoA + H(+). It functions in the pathway amino-acid biosynthesis; L-isoleucine biosynthesis; 2-oxobutanoate from pyruvate: step 1/3. Functionally, catalyzes the condensation of pyruvate and acetyl-coenzyme A to form (R)-citramalate. The polypeptide is (R)-citramalate synthase (Synechocystis sp. (strain ATCC 27184 / PCC 6803 / Kazusa)).